A 307-amino-acid chain; its full sequence is Transcription initiation factor IIF subunit beta (307 aa).

The segment covering 1–12 (MSEEKPTVRTEE) has biased composition (basic and acidic residues). Disordered stretches follow at residues 1 to 22 (MSEE…DAGD) and 261 to 307 (VELR…IDVV). Acidic residues predominate over residues 13 to 22 (DDRYEDDAGD). The span at 263-290 (LRNQQASQSESSSIDHTGKNTSPDNPGT) shows a compositional bias: polar residues. Acidic residues predominate over residues 292–307 (AEEDEDDDGVEMIDVV).

Belongs to the TFIIF beta subunit family. In terms of assembly, component of the fcp1/TFIIF/polII complex via interaction of tfg3 with both tfg1/TFIIF-alpha and tfg2/TFIIF-beta subunits.

The protein resides in the nucleus. Functionally, TFIIF is a general transcription initiation factor that binds to RNA polymerase II and helps to recruit it to the initiation complex in collaboration with TFIIB. It promotes transcription elongation. The polypeptide is Transcription initiation factor IIF subunit beta (tfg2) (Schizosaccharomyces pombe (strain 972 / ATCC 24843) (Fission yeast)).